Consider the following 415-residue polypeptide: Carboxypeptidase B (415 aa).

Positions 1-13 (MLLLLALVSVALA) are cleaved as a signal peptide. Residues 14-108 (HASEEHFDGN…LESQFDSHTR (95 aa)) constitute a propeptide, activation peptide. One can recognise a Peptidase M14 domain in the interval 116 to 410 (KYNKWETIEA…LAVKYIANYV (295 aa)). C171 and C184 are disulfide-bonded. Zn(2+) contacts are provided by H174 and E177. Substrate contacts are provided by residues 174–177 (HARE), R232, and 249–250 (NR). Disulfide bonds link C243–C266 and C257–C271. H302 contributes to the Zn(2+) binding site. Residues 303–304 (SY) and Y354 contribute to the substrate site. E376 functions as the Proton donor/acceptor in the catalytic mechanism.

The protein belongs to the peptidase M14 family. Requires Zn(2+) as cofactor.

It is found in the secreted. It localises to the zymogen granule lumen. The enzyme catalyses Preferential release of a C-terminal lysine or arginine amino acid.. The protein is Carboxypeptidase B (Cpb1) of Rattus norvegicus (Rat).